The sequence spans 173 residues: Adenine phosphoribosyltransferase (173 aa).

Belongs to the purine/pyrimidine phosphoribosyltransferase family. As to quaternary structure, homodimer.

It localises to the cytoplasm. It catalyses the reaction AMP + diphosphate = 5-phospho-alpha-D-ribose 1-diphosphate + adenine. Its pathway is purine metabolism; AMP biosynthesis via salvage pathway; AMP from adenine: step 1/1. Functionally, catalyzes a salvage reaction resulting in the formation of AMP, that is energically less costly than de novo synthesis. This chain is Adenine phosphoribosyltransferase, found in Methanococcus vannielii (strain ATCC 35089 / DSM 1224 / JCM 13029 / OCM 148 / SB).